Reading from the N-terminus, the 1293-residue chain is DNA-directed RNA polymerase subunit beta' (1293 aa).

Positions 60, 62, 75, and 78 each coordinate Zn(2+). Mg(2+) is bound by residues aspartate 535, aspartate 537, and aspartate 539. Residues cysteine 877, cysteine 953, cysteine 960, and cysteine 963 each contribute to the Zn(2+) site.

Belongs to the RNA polymerase beta' chain family. As to quaternary structure, the RNAP catalytic core consists of 2 alpha, 1 beta, 1 beta' and 1 omega subunit. When a sigma factor is associated with the core the holoenzyme is formed, which can initiate transcription. Mg(2+) is required as a cofactor. Zn(2+) serves as cofactor.

The enzyme catalyses RNA(n) + a ribonucleoside 5'-triphosphate = RNA(n+1) + diphosphate. In terms of biological role, DNA-dependent RNA polymerase catalyzes the transcription of DNA into RNA using the four ribonucleoside triphosphates as substrates. This chain is DNA-directed RNA polymerase subunit beta', found in Kineococcus radiotolerans (strain ATCC BAA-149 / DSM 14245 / SRS30216).